Consider the following 179-residue polypeptide: MLEQSAQITLFVLDFFIFVGALGVVFFNNIIYSALFLGLTFLSVALLYLLLGSEFLSVAQVIIYVGAINVLIVFAIMLVNKPEFDKKDMIWVPIDLKSFCVNFILFSTIVTMIVTTPWKLLVNNIDVKLNSLNFLSPIAKIGYQFLSTLVLPFELLSLLLLIALIGAVIIARRELIEDT.

5 helical membrane-spanning segments follow: residues 8–28, 30–50, 58–78, 98–118, and 150–170; these read ITLF…VFFN, IIYS…LYLL, VAQV…AIML, SFCV…TTPW, and VLPF…AVII.

The protein belongs to the complex I subunit 6 family. NDH is composed of at least 16 different subunits, 5 of which are encoded in the nucleus.

Its subcellular location is the plastid. The protein localises to the chloroplast thylakoid membrane. The enzyme catalyses a plastoquinone + NADH + (n+1) H(+)(in) = a plastoquinol + NAD(+) + n H(+)(out). It carries out the reaction a plastoquinone + NADPH + (n+1) H(+)(in) = a plastoquinol + NADP(+) + n H(+)(out). Its function is as follows. NDH shuttles electrons from NAD(P)H:plastoquinone, via FMN and iron-sulfur (Fe-S) centers, to quinones in the photosynthetic chain and possibly in a chloroplast respiratory chain. The immediate electron acceptor for the enzyme in this species is believed to be plastoquinone. Couples the redox reaction to proton translocation, and thus conserves the redox energy in a proton gradient. The protein is NAD(P)H-quinone oxidoreductase subunit 6, chloroplastic (ndhG) of Chaetosphaeridium globosum (Charophycean green alga).